Consider the following 402-residue polypeptide: S-adenosylmethionine synthase (402 aa).

Residue H15 coordinates ATP. Mg(2+) is bound at residue D17. E43 serves as a coordination point for K(+). 2 residues coordinate L-methionine: E56 and Q99. The segment at 99-109 is flexible loop; it reads QSPDIAQGVDT. ATP contacts are provided by residues 174–176, 247–248, D256, 262–263, A279, and K283; these read DGK, RF, and RK. Residue D256 participates in L-methionine binding. Residue K287 coordinates L-methionine.

Belongs to the AdoMet synthase family. As to quaternary structure, homotetramer; dimer of dimers. Requires Mg(2+) as cofactor. K(+) is required as a cofactor.

It is found in the cytoplasm. It catalyses the reaction L-methionine + ATP + H2O = S-adenosyl-L-methionine + phosphate + diphosphate. It participates in amino-acid biosynthesis; S-adenosyl-L-methionine biosynthesis; S-adenosyl-L-methionine from L-methionine: step 1/1. Its function is as follows. Catalyzes the formation of S-adenosylmethionine (AdoMet) from methionine and ATP. The overall synthetic reaction is composed of two sequential steps, AdoMet formation and the subsequent tripolyphosphate hydrolysis which occurs prior to release of AdoMet from the enzyme. This is S-adenosylmethionine synthase from Streptomyces avermitilis (strain ATCC 31267 / DSM 46492 / JCM 5070 / NBRC 14893 / NCIMB 12804 / NRRL 8165 / MA-4680).